Here is a 142-residue protein sequence, read N- to C-terminus: Hemoglobin subunit zeta (142 aa).

An N-acetylserine modification is found at Ser-2. A Globin domain is found at 2–142 (SLTKTEGTII…VSSVLTEKYR (141 aa)). Thr-29 carries the post-translational modification Phosphothreonine. Ser-53 is subject to Phosphoserine. His-59 is a binding site for heme b. 2 positions are modified to phosphoserine: Ser-73 and Ser-82. His-88 is a heme b binding site.

It belongs to the globin family. As to quaternary structure, heterotetramer of two zeta chains and beta-type chains.

Its function is as follows. The zeta chain is an alpha-type chain of mammalian embryonic hemoglobin. In Pan troglodytes (Chimpanzee), this protein is Hemoglobin subunit zeta (HBZ1).